The chain runs to 341 residues: tRNA N6-adenosine threonylcarbamoyltransferase (341 aa).

Fe cation-binding residues include His-111 and His-115. Residues 133-137 (AVSGG), Asp-166, Gly-179, Asp-183, and Asn-273 contribute to the substrate site. Fe cation is bound at residue Asp-301.

Belongs to the KAE1 / TsaD family. Fe(2+) serves as cofactor.

Its subcellular location is the cytoplasm. It carries out the reaction L-threonylcarbamoyladenylate + adenosine(37) in tRNA = N(6)-L-threonylcarbamoyladenosine(37) in tRNA + AMP + H(+). Its function is as follows. Required for the formation of a threonylcarbamoyl group on adenosine at position 37 (t(6)A37) in tRNAs that read codons beginning with adenine. Is involved in the transfer of the threonylcarbamoyl moiety of threonylcarbamoyl-AMP (TC-AMP) to the N6 group of A37, together with TsaE and TsaB. TsaD likely plays a direct catalytic role in this reaction. In Geobacter metallireducens (strain ATCC 53774 / DSM 7210 / GS-15), this protein is tRNA N6-adenosine threonylcarbamoyltransferase.